Here is a 364-residue protein sequence, read N- to C-terminus: Carbamoyl phosphate synthase small chain (364 aa).

CPSase regions lie at residues 1–167 (MKRQ…PSPG) and 1–171 (MKRQ…RGER). L-glutamine contacts are provided by Ser-45, Gly-219, and Gly-221. The Glutamine amidotransferase type-1 domain occupies 171-358 (RIVLIDFGMK…LALIREFNKK (188 aa)). Catalysis depends on Cys-246, which acts as the Nucleophile. Residues Leu-247, Gln-250, Asn-288, Gly-290, and Tyr-291 each contribute to the L-glutamine site. Active-site residues include His-331 and Glu-333.

The protein belongs to the CarA family. Composed of two chains; the small (or glutamine) chain promotes the hydrolysis of glutamine to ammonia, which is used by the large (or ammonia) chain to synthesize carbamoyl phosphate. Tetramer of heterodimers (alpha,beta)4.

It catalyses the reaction hydrogencarbonate + L-glutamine + 2 ATP + H2O = carbamoyl phosphate + L-glutamate + 2 ADP + phosphate + 2 H(+). The catalysed reaction is L-glutamine + H2O = L-glutamate + NH4(+). The protein operates within amino-acid biosynthesis; L-arginine biosynthesis; carbamoyl phosphate from bicarbonate: step 1/1. Its pathway is pyrimidine metabolism; UMP biosynthesis via de novo pathway; (S)-dihydroorotate from bicarbonate: step 1/3. Functionally, small subunit of the glutamine-dependent carbamoyl phosphate synthetase (CPSase). CPSase catalyzes the formation of carbamoyl phosphate from the ammonia moiety of glutamine, carbonate, and phosphate donated by ATP, constituting the first step of 2 biosynthetic pathways, one leading to arginine and/or urea and the other to pyrimidine nucleotides. The small subunit (glutamine amidotransferase) binds and cleaves glutamine to supply the large subunit with the substrate ammonia. In Bacillus caldolyticus, this protein is Carbamoyl phosphate synthase small chain.